The sequence spans 356 residues: Neutral protease 2 homolog MEP5 (356 aa).

Positions 1 to 19 (MRVSSSLIALAALAVQALA) are cleaved as a signal peptide. Residues 20–179 (LPVNELAERD…ASAIPELDKR (160 aa)) constitute a propeptide that is removed on maturation. 2 cysteine pairs are disulfide-bonded: C187–C259 and C266–C284. H308 is a binding site for Zn(2+). Residue E309 is part of the active site. Zn(2+)-binding residues include H312 and D323.

This sequence belongs to the peptidase M35 family. The cofactor is Zn(2+).

It is found in the secreted. It catalyses the reaction Preferential cleavage of bonds with hydrophobic residues in P1'. Also 3-Asn-|-Gln-4 and 8-Gly-|-Ser-9 bonds in insulin B chain.. Functionally, secreted metalloproteinase that allows assimilation of proteinaceous substrates. Shows high activities on basic nuclear substrates such as histone and protamine. May be involved in virulence. The protein is Neutral protease 2 homolog MEP5 (MEP5) of Coccidioides posadasii (strain C735) (Valley fever fungus).